The sequence spans 76 residues: Protein OPG128 (76 aa).

The cysteines at positions 17 and 21 are disulfide-linked.

Belongs to the orthopoxvirus OPG128 family. In terms of assembly, interacts with sulfhydryl oxidase OPG072; this interaction involves formation of a transient disulfide-bonded intermediate, allowing disulfide bond transfer. Interacts with OPG088; this interaction involves formation of a transient disulfide-bonded intermediate, allowing disulfide bond transfer.

Functionally, late protein which probably participates in disulfide bond formation by functioning as a thiol-disulfide transfer protein between membrane-associated OPG072 and OPG08. The complete pathway for formation of disulfide bonds in intracellular virion membrane proteins sequentially involves oxidation of OPG072, OPG128 and OPG08. In Bos taurus (Bovine), this protein is Protein OPG128 (OPG128).